Reading from the N-terminus, the 2327-residue chain is Acetyl-CoA carboxylase 2 (2327 aa).

Residues 1 to 62 (MTSTHVATLG…NGGVSDSKKL (62 aa)) form a disordered region. Residues 134 to 641 (PIHSVLVANN…HTGWLDTRIA (508 aa)) form the Biotin carboxylation domain. Residues 287–481 (ECCLDSIPDE…AAQVAVGMGI (195 aa)) form the ATP-grasp domain. An ATP-binding site is contributed by 313–370 (CQVVGYPAMIKASWGGGGKGIRKVHNDDEVRTLFKQVQGEVPGSPIFIMRLAAQSRHL). 3 residues coordinate Mg(2+): E436, E450, and N452. Positions 436, 450, and 452 each coordinate Mn(2+). R454 is an active-site residue. A Biotinyl-binding domain is found at 768–842 (LQNDHDPSKL…QAGDLIARLD (75 aa)). N6-biotinyllysine is present on K809. The region spanning 1568-1909 (PYQPLSVIDL…YIGGPLPVTT (342 aa)) is the CoA carboxyltransferase N-terminal domain. The interval 1568 to 2227 (PYQPLSVIDL…EDVLAKEIRA (660 aa)) is carboxyltransferase. CoA is bound by residues R1818, K2119, and R2121. The 315-residue stretch at 1913-2227 (PPDRPVAYIP…EDVLAKEIRA (315 aa)) folds into the CoA carboxyltransferase C-terminal domain.

In terms of assembly, homodimer. Biotin serves as cofactor. It depends on Mg(2+) as a cofactor. The cofactor is Mn(2+).

The protein localises to the cytoplasm. Its subcellular location is the cytosol. The catalysed reaction is hydrogencarbonate + acetyl-CoA + ATP = malonyl-CoA + ADP + phosphate + H(+). The enzyme catalyses N(6)-biotinyl-L-lysyl-[protein] + hydrogencarbonate + ATP = N(6)-carboxybiotinyl-L-lysyl-[protein] + ADP + phosphate + H(+). The protein operates within lipid metabolism; malonyl-CoA biosynthesis; malonyl-CoA from acetyl-CoA: step 1/1. In terms of biological role, multifunctional enzyme that catalyzes the carboxylation of acetyl-CoA, forming malonyl-CoA, which is used in the plastid for fatty acid synthesis and in the cytosol in various biosynthetic pathways including fatty acid elongation. The chain is Acetyl-CoA carboxylase 2 (ACC2) from Oryza sativa subsp. japonica (Rice).